Here is a 640-residue protein sequence, read N- to C-terminus: Threonine--tRNA ligase (640 aa).

The TGS domain occupies 1-61 (MPVVTLPDGS…DKDSHLAIIT (61 aa)). The segment at 242–533 (DHRRLGKQLD…LIENHAGNMP (292 aa)) is catalytic. Residues cysteine 333, histidine 384, and histidine 510 each coordinate Zn(2+).

The protein belongs to the class-II aminoacyl-tRNA synthetase family. Homodimer. It depends on Zn(2+) as a cofactor.

It localises to the cytoplasm. It carries out the reaction tRNA(Thr) + L-threonine + ATP = L-threonyl-tRNA(Thr) + AMP + diphosphate + H(+). Catalyzes the attachment of threonine to tRNA(Thr) in a two-step reaction: L-threonine is first activated by ATP to form Thr-AMP and then transferred to the acceptor end of tRNA(Thr). Also edits incorrectly charged L-seryl-tRNA(Thr). In Polynucleobacter asymbioticus (strain DSM 18221 / CIP 109841 / QLW-P1DMWA-1) (Polynucleobacter necessarius subsp. asymbioticus), this protein is Threonine--tRNA ligase.